Reading from the N-terminus, the 65-residue chain is UPF0434 protein BBta_0300 (65 aa).

Belongs to the UPF0434 family.

The protein is UPF0434 protein BBta_0300 of Bradyrhizobium sp. (strain BTAi1 / ATCC BAA-1182).